The chain runs to 290 residues: Oxaloacetate decarboxylase 2 (290 aa).

Serine 50 contacts substrate. Residue aspartate 88 participates in Mg(2+) binding. The substrate site is built by arginine 159 and histidine 235.

This sequence belongs to the isocitrate lyase/PEP mutase superfamily. Oxaloacetate decarboxylase family. In terms of assembly, homotetramer; dimer of dimers. It depends on Mg(2+) as a cofactor.

It carries out the reaction oxaloacetate + H(+) = pyruvate + CO2. Functionally, catalyzes the decarboxylation of oxaloacetate into pyruvate. Seems to play a role in maintaining cellular concentrations of bicarbonate and pyruvate. The protein is Oxaloacetate decarboxylase 2 of Pseudomonas fluorescens (strain Pf0-1).